We begin with the raw amino-acid sequence, 512 residues long: Lysine--tRNA ligase (512 aa).

The Mg(2+) site is built by Glu-408 and Glu-415.

This sequence belongs to the class-II aminoacyl-tRNA synthetase family. In terms of assembly, homodimer. Mg(2+) is required as a cofactor.

The protein localises to the cytoplasm. It carries out the reaction tRNA(Lys) + L-lysine + ATP = L-lysyl-tRNA(Lys) + AMP + diphosphate. The protein is Lysine--tRNA ligase of Prochlorococcus marinus (strain MIT 9301).